A 557-amino-acid chain; its full sequence is CTP synthase (557 aa).

An amidoligase domain region spans residues 1–272 (MARSKIVKHI…DSLVLKKLML (272 aa)). A CTP-binding site is contributed by Ser-18. Ser-18 lines the UTP pocket. 19–24 (SLGKGI) contributes to the ATP binding site. Position 59 (Tyr-59) interacts with L-glutamine. Asp-76 provides a ligand contact to ATP. Positions 76 and 146 each coordinate Mg(2+). CTP is bound by residues 153–155 (DIE), 193–198 (KTKPTQ), and Lys-229. Residues 193–198 (KTKPTQ) and Lys-229 each bind UTP. A Glutamine amidotransferase type-1 domain is found at 299-543 (EIGVCGKYTK…VAEAKKFRDE (245 aa)). Gly-363 contributes to the L-glutamine binding site. Cys-390 serves as the catalytic Nucleophile; for glutamine hydrolysis. L-glutamine is bound by residues 391–394 (LGMQ), Glu-414, and Arg-471. Active-site residues include His-516 and Glu-518.

The protein belongs to the CTP synthase family. As to quaternary structure, homotetramer.

The catalysed reaction is UTP + L-glutamine + ATP + H2O = CTP + L-glutamate + ADP + phosphate + 2 H(+). It catalyses the reaction L-glutamine + H2O = L-glutamate + NH4(+). It carries out the reaction UTP + NH4(+) + ATP = CTP + ADP + phosphate + 2 H(+). The protein operates within pyrimidine metabolism; CTP biosynthesis via de novo pathway; CTP from UDP: step 2/2. Allosterically activated by GTP, when glutamine is the substrate; GTP has no effect on the reaction when ammonia is the substrate. The allosteric effector GTP functions by stabilizing the protein conformation that binds the tetrahedral intermediate(s) formed during glutamine hydrolysis. Inhibited by the product CTP, via allosteric rather than competitive inhibition. Catalyzes the ATP-dependent amination of UTP to CTP with either L-glutamine or ammonia as the source of nitrogen. Regulates intracellular CTP levels through interactions with the four ribonucleotide triphosphates. This is CTP synthase from Chloroherpeton thalassium (strain ATCC 35110 / GB-78).